Consider the following 389-residue polypeptide: Ribonucleoside-diphosphate reductase subunit M2 (389 aa).

Residue Ser20 is modified to Phosphoserine. A Phosphothreonine modification is found at Thr33. The Cy signature appears at 49–51 (RRI). Residues Asp138, Glu169, and His172 each coordinate Fe cation. The active site involves Tyr176. Glu232, Glu266, and His269 together coordinate Fe cation.

The protein belongs to the ribonucleoside diphosphate reductase small chain family. Heterodimer of a large and a small subunit. Interacts (via Cy motif and when phosphorylated at Thr-33) with CCNF; the interaction occurs exclusively in G2 and early M. Requires Fe cation as cofactor. Phosphorylation on Ser-20 relieves the inhibitory effect on Wnt signaling. Phosphorylated on Thr-33 by CDK1 and CDK2; predominantly in G2 and M phase. In terms of processing, ubiquitinated by the SCF(CCNF) E3 ubiquitin-protein ligase complex; leading to its degradation by the proteasome.

The protein resides in the cytoplasm. The protein localises to the nucleus. It carries out the reaction a 2'-deoxyribonucleoside 5'-diphosphate + [thioredoxin]-disulfide + H2O = a ribonucleoside 5'-diphosphate + [thioredoxin]-dithiol. Its function is as follows. Provides the precursors necessary for DNA synthesis. Catalyzes the biosynthesis of deoxyribonucleotides from the corresponding ribonucleotides. Inhibits Wnt signaling. The chain is Ribonucleoside-diphosphate reductase subunit M2 (RRM2) from Macaca fascicularis (Crab-eating macaque).